Reading from the N-terminus, the 344-residue chain is Enoyl-[acyl-carrier-protein] reductase, mitochondrial (344 aa).

The transit peptide at 1-14 (MLKVLSLRSALQRA) directs the protein to the mitochondrion. Y69 functions as the Proton donor in the catalytic mechanism. NADP(+) contacts are provided by residues N142, 168 to 171 (NSAV), 191 to 193 (RSR), 255 to 258 (YGGM), 280 to 282 (FWM), and K338.

It belongs to the zinc-containing alcohol dehydrogenase family. Quinone oxidoreductase subfamily. As to quaternary structure, homodimer.

The protein resides in the mitochondrion. The catalysed reaction is a 2,3-saturated acyl-[ACP] + NADP(+) = a (2E)-enoyl-[ACP] + NADPH + H(+). In terms of biological role, catalyzes the NADPH-dependent reduction of trans-2-enoyl thioesters in mitochondrial fatty acid synthesis (fatty acid synthesis type II). Fatty acid chain elongation in mitochondria uses acyl carrier protein (ACP) as an acyl group carrier, but the enzyme accepts both ACP and CoA thioesters as substrates in vitro. May provide the octanoyl chain used for lipoic acid biosynthesis, regulating protein lipoylation and mitochondrial respiratory activity. Involved in iron homeostasis; affecting Fe-S cluster assembly and ceramide metabolism. Required for proper morphology and bioenergetic functions of mitochondria. Required for maintenance of neurons. The chain is Enoyl-[acyl-carrier-protein] reductase, mitochondrial from Caenorhabditis elegans.